Here is a 250-residue protein sequence, read N- to C-terminus: Phosphoribosylaminoimidazole-succinocarboxamide synthase (250 aa).

It belongs to the SAICAR synthetase family.

The catalysed reaction is 5-amino-1-(5-phospho-D-ribosyl)imidazole-4-carboxylate + L-aspartate + ATP = (2S)-2-[5-amino-1-(5-phospho-beta-D-ribosyl)imidazole-4-carboxamido]succinate + ADP + phosphate + 2 H(+). The protein operates within purine metabolism; IMP biosynthesis via de novo pathway; 5-amino-1-(5-phospho-D-ribosyl)imidazole-4-carboxamide from 5-amino-1-(5-phospho-D-ribosyl)imidazole-4-carboxylate: step 1/2. This Synechococcus sp. (strain WH7803) protein is Phosphoribosylaminoimidazole-succinocarboxamide synthase.